Here is a 402-residue protein sequence, read N- to C-terminus: Argininosuccinate synthase (402 aa).

ATP is bound by residues 13–21 and A40; that span reads AYSGGLDTS. Residues Y91 and S96 each coordinate L-citrulline. Residue G121 coordinates ATP. T123, N127, and D128 together coordinate L-aspartate. N127 contributes to the L-citrulline binding site. L-citrulline contacts are provided by R131, S180, S189, E265, and Y277.

Belongs to the argininosuccinate synthase family. Type 1 subfamily. As to quaternary structure, homotetramer.

It localises to the cytoplasm. It carries out the reaction L-citrulline + L-aspartate + ATP = 2-(N(omega)-L-arginino)succinate + AMP + diphosphate + H(+). Its pathway is amino-acid biosynthesis; L-arginine biosynthesis; L-arginine from L-ornithine and carbamoyl phosphate: step 2/3. The polypeptide is Argininosuccinate synthase (Leptospira biflexa serovar Patoc (strain Patoc 1 / Ames)).